The primary structure comprises 59 residues: Protein NapE (59 aa).

Residues 1-18 are Cytoplasmic-facing; that stretch reads MIDSAKETDRPKHRKRDE. Residues 19 to 43 form a helical membrane-spanning segment; that stretch reads VIAFLILAVVIWPILSVAIVGGYGF. Topologically, residues 44-59 are periplasmic; it reads LVWMSQIIFGPPGPMH.

It is found in the cell inner membrane. Its function is as follows. May be involved in mediating interactions between NapC and a quinol oxidase. In Paracoccus pantotrophus (Thiosphaera pantotropha), this protein is Protein NapE (napE).